The chain runs to 375 residues: Period circadian protein (375 aa).

Disordered stretches follow at residues 27–119 (VTAP…VPPV), 140–189 (KHRE…WEGE), and 219–255 (KCQASGAGGGGSGSVGGTGNIGSGGSNAQPSTNQYTQ). The span at 69–91 (SGNFTTGSNLHMSSVTNTSNAGT) shows a compositional bias: low complexity. A compositionally biased stretch (gly residues) spans 92-113 (GTSGTGNSGGGGGGGGGAGPGN). The segment covering 145–156 (RGRSGEKNKKSA) has biased composition (basic and acidic residues). A compositionally biased stretch (gly residues) spans 224-243 (GAGGGGSGSVGGTGNIGSGG). A compositionally biased stretch (polar residues) spans 245-255 (NAQPSTNQYTQ).

Forms a heterodimer with timeless (TIM); the complex then translocates into the nucleus. In terms of processing, phosphorylated with a circadian rhythmicity, probably by the double-time protein (dbt). Phosphorylation could be implicated in the stability of per monomer and in the formation of heterodimer per-tim.

Its subcellular location is the nucleus. The protein localises to the cytoplasm. The protein resides in the perinuclear region. Its function is as follows. Essential for biological clock functions. Determines the period length of circadian and ultradian rhythms; an increase in PER dosage leads to shortened circadian rhythms and a decrease leads to lengthened circadian rhythms. Essential for the circadian rhythmicity of locomotor activity, eclosion behavior, and for the rhythmic component of the male courtship song that originates in the thoracic nervous system. The biological cycle depends on the rhythmic formation and nuclear localization of the TIM-PER complex. Light induces the degradation of TIM, which promotes elimination of PER. Nuclear activity of the heterodimer coordinatively regulates PER and TIM transcription through a negative feedback loop. Behaves as a negative element in circadian transcriptional loop. Does not appear to bind DNA, suggesting indirect transcriptional inhibition. This Drosophila sucinea (Fruit fly) protein is Period circadian protein (per).